Consider the following 279-residue polypeptide: Putative carbamate hydrolase RutD (279 aa).

Positions 23–126 (PVVVLISGLG…LVSVNGWLRI (104 aa)) constitute an AB hydrolase-1 domain.

Belongs to the AB hydrolase superfamily. Hydrolase RutD family.

The catalysed reaction is carbamate + 2 H(+) = NH4(+) + CO2. Involved in pyrimidine catabolism. May facilitate the hydrolysis of carbamate, a reaction that can also occur spontaneously. In Escherichia coli O17:K52:H18 (strain UMN026 / ExPEC), this protein is Putative carbamate hydrolase RutD.